A 526-amino-acid polypeptide reads, in one-letter code: Peptide chain release factor 3 (526 aa).

The region spanning 8-277 is the tr-type G domain; that stretch reads NKRRTFAIIS…GLTEWAPKPQ (270 aa). GTP-binding positions include 17-24, 85-89, and 139-142; these read SHPDAGKT, DTPGH, and NKLD.

The protein belongs to the TRAFAC class translation factor GTPase superfamily. Classic translation factor GTPase family. PrfC subfamily.

Its subcellular location is the cytoplasm. In terms of biological role, increases the formation of ribosomal termination complexes and stimulates activities of RF-1 and RF-2. It binds guanine nucleotides and has strong preference for UGA stop codons. It may interact directly with the ribosome. The stimulation of RF-1 and RF-2 is significantly reduced by GTP and GDP, but not by GMP. This Actinobacillus pleuropneumoniae serotype 3 (strain JL03) protein is Peptide chain release factor 3.